The chain runs to 599 residues: Elongation factor 4 (599 aa).

The tr-type G domain maps to 5 to 187; the sequence is SHIRNFSIIA…HLVRVIPPPQ (183 aa). GTP is bound by residues 17 to 22 and 134 to 137; these read DHGKST and NKMD.

It belongs to the TRAFAC class translation factor GTPase superfamily. Classic translation factor GTPase family. LepA subfamily.

Its subcellular location is the cell inner membrane. It catalyses the reaction GTP + H2O = GDP + phosphate + H(+). In terms of biological role, required for accurate and efficient protein synthesis under certain stress conditions. May act as a fidelity factor of the translation reaction, by catalyzing a one-codon backward translocation of tRNAs on improperly translocated ribosomes. Back-translocation proceeds from a post-translocation (POST) complex to a pre-translocation (PRE) complex, thus giving elongation factor G a second chance to translocate the tRNAs correctly. Binds to ribosomes in a GTP-dependent manner. The protein is Elongation factor 4 of Azotobacter vinelandii (strain DJ / ATCC BAA-1303).